The chain runs to 761 residues: Protein ACTIVITY OF BC1 COMPLEX KINASE 8, chloroplastic (761 aa).

The N-terminal 57 residues, 1–57 (MATSSSSSSSLLLPNINFNSRQSPTITRSVSIAGIFLPRNRLSYNHNLRIRTRLIRA), are a transit peptide targeting the chloroplast. The region spanning 288–648 (RFDYEPIAAA…VKDLRKRWDR (361 aa)) is the Protein kinase domain. ATP-binding positions include 294–302 (IAAASLGQV) and Lys315. The active-site Proton acceptor is the Asp452. The chain crosses the membrane as a helical span at residues 725–745 (PATIAYTVCAFFSLQVLIGII).

It belongs to the protein kinase superfamily. ADCK protein kinase family. In terms of tissue distribution, mostly expressed in leaves and flowers, and, to a lower extent, in stems, siliques and roots.

The protein resides in the plastid. It localises to the chloroplast envelope. It is found in the chloroplast membrane. The enzyme catalyses L-seryl-[protein] + ATP = O-phospho-L-seryl-[protein] + ADP + H(+). The catalysed reaction is L-threonyl-[protein] + ATP = O-phospho-L-threonyl-[protein] + ADP + H(+). Involved in resistance to oxidative stress (e.g. hydrogen peroxide H(2)O(2)), high light and heavy metals (e.g. cadmium ions Cd(2+)). Influences responses to reactive oxygen species (ROS) production. Together with SIA1, regulates iron distribution within the chloroplast and mediates the oxidative stress response. Together with ABC1K7, influences chloroplast lipid synthesis/accumulation and modulates chloroplast membrane composition in response to stress. The chain is Protein ACTIVITY OF BC1 COMPLEX KINASE 8, chloroplastic from Arabidopsis thaliana (Mouse-ear cress).